We begin with the raw amino-acid sequence, 591 residues long: V-type ATP synthase alpha chain (591 aa).

233–240 is an ATP binding site; it reads GPFGAGKT.

Belongs to the ATPase alpha/beta chains family.

It catalyses the reaction ATP + H2O + 4 H(+)(in) = ADP + phosphate + 5 H(+)(out). Its function is as follows. Produces ATP from ADP in the presence of a proton gradient across the membrane. The V-type alpha chain is a catalytic subunit. This is V-type ATP synthase alpha chain from Streptococcus pyogenes serotype M28 (strain MGAS6180).